The following is a 156-amino-acid chain: Protein-export protein SecB (156 aa).

It belongs to the SecB family. In terms of assembly, homotetramer, a dimer of dimers. One homotetramer interacts with 1 SecA dimer.

The protein localises to the cytoplasm. In terms of biological role, one of the proteins required for the normal export of preproteins out of the cell cytoplasm. It is a molecular chaperone that binds to a subset of precursor proteins, maintaining them in a translocation-competent state. It also specifically binds to its receptor SecA. The chain is Protein-export protein SecB from Paraburkholderia phymatum (strain DSM 17167 / CIP 108236 / LMG 21445 / STM815) (Burkholderia phymatum).